A 363-amino-acid chain; its full sequence is NAD(P)H-quinone oxidoreductase subunit 1, chloroplastic (363 aa).

A run of 6 helical transmembrane segments spans residues 30–50, 98–118, 129–149, 248–268, 300–320, and 336–356; these read LVPI…IVWL, FSIG…IIPF, IGVF…LMSG, YSGI…LVSS, VFGT…FLFI, and LLNL…LLTT.

The protein belongs to the complex I subunit 1 family. As to quaternary structure, NDH is composed of at least 16 different subunits, 5 of which are encoded in the nucleus.

It is found in the plastid. The protein localises to the chloroplast thylakoid membrane. The enzyme catalyses a plastoquinone + NADH + (n+1) H(+)(in) = a plastoquinol + NAD(+) + n H(+)(out). It catalyses the reaction a plastoquinone + NADPH + (n+1) H(+)(in) = a plastoquinol + NADP(+) + n H(+)(out). Functionally, NDH shuttles electrons from NAD(P)H:plastoquinone, via FMN and iron-sulfur (Fe-S) centers, to quinones in the photosynthetic chain and possibly in a chloroplast respiratory chain. The immediate electron acceptor for the enzyme in this species is believed to be plastoquinone. Couples the redox reaction to proton translocation, and thus conserves the redox energy in a proton gradient. The polypeptide is NAD(P)H-quinone oxidoreductase subunit 1, chloroplastic (Vitis vinifera (Grape)).